Consider the following 331-residue polypeptide: Pseudouridylate synthase TRUB2, mitochondrial (331 aa).

Residues 1–10 (MGSAGLSRLH) constitute a mitochondrion transit peptide. Residue Asp98 is the Nucleophile of the active site. The disordered stretch occupies residues 296-331 (KSLSPGLDTKQLPSPGWSWDSQGPSSTLGLERGAGQ). Residues 314 to 323 (WDSQGPSSTL) are compositionally biased toward polar residues.

The protein belongs to the pseudouridine synthase TruB family. As to quaternary structure, forms a regulatory protein-RNA complex, consisting of RCC1L, NGRN, RPUSD3, RPUSD4, TRUB2, FASTKD2 and 16S mt-rRNA.

It is found in the mitochondrion matrix. It carries out the reaction a uridine in mRNA = a pseudouridine in mRNA. It catalyses the reaction uridine(55) in tRNA = pseudouridine(55) in tRNA. In terms of biological role, minor enzyme contributing to the isomerization of uridine to pseudouridine (pseudouridylation) of specific mitochondrial mRNAs (mt-mRNAs) such as COXI and COXIII mt-mRNAs. As a component of a functional protein-RNA module, consisting of RCC1L, NGRN, RPUSD3, RPUSD4, TRUB2, FASTKD2 and 16S mitochondrial ribosomal RNA (16S mt-rRNA), controls 16S mt-rRNA abundance and is required for intra-mitochondrial translation. Also catalyzes pseudouridylation of some tRNAs, including synthesis of pseudouridine(55) from uracil-55, in the psi GC loop of a subset of tRNAs. This chain is Pseudouridylate synthase TRUB2, mitochondrial, found in Homo sapiens (Human).